Consider the following 396-residue polypeptide: Phosphoglycerate kinase (396 aa).

Residues 22–24 (DLN), Arg-37, 60–63 (HFGR), Arg-118, and Arg-151 contribute to the substrate site. ATP is bound by residues Lys-201, Glu-323, and 353 to 356 (GGDT).

The protein belongs to the phosphoglycerate kinase family. In terms of assembly, monomer.

The protein resides in the cytoplasm. The catalysed reaction is (2R)-3-phosphoglycerate + ATP = (2R)-3-phospho-glyceroyl phosphate + ADP. The protein operates within carbohydrate degradation; glycolysis; pyruvate from D-glyceraldehyde 3-phosphate: step 2/5. The chain is Phosphoglycerate kinase from Xanthobacter autotrophicus (strain ATCC BAA-1158 / Py2).